A 159-amino-acid polypeptide reads, in one-letter code: NADH-quinone oxidoreductase subunit B (159 aa).

Residues C37, C38, C102, and C132 each contribute to the [4Fe-4S] cluster site.

The protein belongs to the complex I 20 kDa subunit family. NDH-1 is composed of 14 different subunits. Subunits NuoB, C, D, E, F, and G constitute the peripheral sector of the complex. [4Fe-4S] cluster serves as cofactor.

It localises to the cell inner membrane. It catalyses the reaction a quinone + NADH + 5 H(+)(in) = a quinol + NAD(+) + 4 H(+)(out). Functionally, NDH-1 shuttles electrons from NADH, via FMN and iron-sulfur (Fe-S) centers, to quinones in the respiratory chain. Couples the redox reaction to proton translocation (for every two electrons transferred, four hydrogen ions are translocated across the cytoplasmic membrane), and thus conserves the redox energy in a proton gradient. In Ruthia magnifica subsp. Calyptogena magnifica, this protein is NADH-quinone oxidoreductase subunit B.